Reading from the N-terminus, the 4246-residue chain is Intermembrane lipid transfer protein vps13F (4246 aa).

Positions 2–113 (FESIVSNLLT…LLLQKKLKKL (112 aa)) constitute a Chorein N-terminal domain. 16 disordered regions span residues 141–271 (IKEK…EDED), 401–420 (PKKSSPSTTTTTPPISPPPK), 591–759 (KAED…SILG), 914–944 (VSSSPSPVSSPSRDKRLEEETKQEDEKEKKL), 964–1014 (KKSK…TNDE), 1217–1251 (QAQQQAQQQQQSQHPSSNDDNSSSNGGCSVDIKSP), 1356–1379 (ISTHFSSKKNAEDENNNSNLDRVD), 1395–1436 (YNGV…KSKK), 1622–1683 (REKR…KSQS), 2101–2131 (LESLHDHKSSSSSSSSSPPPPPPPSSSQQQQ), 2211–2237 (HHSKEKNQQSADGSGLSPPLSKDEKEK), 2471–2513 (QQQH…KSKQ), 2704–2756 (LSTS…QTTK), 3421–3449 (IDDDQDSDSDSGSSNSSSPSISSSSTSPL), 3611–3652 (KTLN…NNQN), and 3794–3813 (NNNNNQNNNNQNNDFNNIDE). The segment covering 168–201 (NASPVNSNNNNNNNSNLVSESNIPSSSSSSSSSL) has biased composition (low complexity). The segment covering 207 to 217 (NSSKDANKSDD) has biased composition (basic and acidic residues). The segment covering 218-271 (TDMDVDDDDEFQEATEGDYDNEEEQDDHDEEDDLSDDDDDDDDEEDDYEMEDED) has biased composition (acidic residues). Composition is skewed to low complexity over residues 401–413 (PKKSSPSTTTTTP) and 597–658 (QQQQ…SNST). Basic and acidic residues predominate over residues 659-668 (DSKDIMKSSG). Low complexity predominate over residues 669–680 (DKNVNNNNNMGD). Residues 681-702 (NENKDNIDKKEENKNDDQDNKN) show a composition bias toward basic and acidic residues. Low complexity-rich tracts occupy residues 725 to 747 (SGGWFKWFGWGSSNKSKQQQQQQ) and 914 to 924 (VSSSPSPVSSP). Composition is skewed to basic and acidic residues over residues 925 to 944 (SRDKRLEEETKQEDEKEKKL) and 987 to 1001 (DKYSTKGTTESREES). Positions 1217–1241 (QAQQQAQQQQQSQHPSSNDDNSSSN) are enriched in low complexity. Acidic residues predominate over residues 1400–1409 (SDDDNNDDEN). Composition is skewed to basic and acidic residues over residues 1410–1431 (DKTTQDDQDDKEKSSGNDDSLK) and 1622–1634 (REKRKRLEKDKDN). Positions 1644–1670 (QQSIPQKQQQQQQQQQQQQQQQQQQQQ) are enriched in low complexity. Low complexity-rich tracts occupy residues 2471–2506 (QQQHQQQNNNSNNNNNNNNNNNNNNNNNNNNNNNNN), 2705–2755 (STST…TQTT), 3430–3449 (DSGSSNSSSPSISSSSTSPL), 3613–3652 (LNNNNNNNNNNNNNNLNSVTKDNNNNNNQNNNNQNNNNQN), and 3794–3809 (NNNNNQNNNNQNNDFN).

The protein belongs to the VPS13 family.

It is found in the membrane. Mediates the transfer of lipids between membranes at organelle contact sites. The polypeptide is Intermembrane lipid transfer protein vps13F (vps13F) (Dictyostelium discoideum (Social amoeba)).